A 691-amino-acid chain; its full sequence is Elongation factor G (691 aa).

Residues 8-283 (KRVRNIGIAA…AVVAYLPAPD (276 aa)) enclose the tr-type G domain. GTP contacts are provided by residues 17–24 (AHIDAGKT), 81–85 (DTPGH), and 135–138 (NKMD).

The protein belongs to the TRAFAC class translation factor GTPase superfamily. Classic translation factor GTPase family. EF-G/EF-2 subfamily.

Its subcellular location is the cytoplasm. Functionally, catalyzes the GTP-dependent ribosomal translocation step during translation elongation. During this step, the ribosome changes from the pre-translocational (PRE) to the post-translocational (POST) state as the newly formed A-site-bound peptidyl-tRNA and P-site-bound deacylated tRNA move to the P and E sites, respectively. Catalyzes the coordinated movement of the two tRNA molecules, the mRNA and conformational changes in the ribosome. The sequence is that of Elongation factor G from Campylobacter lari (strain RM2100 / D67 / ATCC BAA-1060).